Reading from the N-terminus, the 308-residue chain is MNRKAPTGILGFPVTPFDNQGNIDELALSQNIKYLLDSGLEAIFVACGAGEYHSLENGEYESIIEIATSTVKGQVPVYTGVGGNLSDAVHKAKLSEKHGVDGYLIMPAYLINGEQEGIYQYVHSIATSTDLNAIVYQRDNVVMNLDTIEKLVEIPQIVGFKDGHGSMEHIIEFTQSIGNKIGWLNGMPMAEVTMPAYIPLGFDSYSSAISNYIPHISRKFYDALLEGDETTVNEIYQEVILPINRIRRQGKGYAISLIKAGMEIVGLPINSNNVRPPVTPVKKEHYEQLEEILKKALIKYPSNLTKSL.

This sequence belongs to the DapA family.

It carries out the reaction 5-dehydro-4-deoxy-D-glucarate + H(+) = 2,5-dioxopentanoate + CO2 + H2O. It functions in the pathway carbohydrate acid metabolism; D-glucarate degradation; 2,5-dioxopentanoate from D-glucarate: step 2/2. In Oceanobacillus iheyensis (strain DSM 14371 / CIP 107618 / JCM 11309 / KCTC 3954 / HTE831), this protein is Probable 5-dehydro-4-deoxyglucarate dehydratase.